We begin with the raw amino-acid sequence, 432 residues long: MKFTLVATVLLTFSLSAFAVEYPVLTTASPDQVGFDSQKLHRLDGWIQNQIDAGYPSINLLVIKDNHIVLQKAWGYAKKYDGSTLLAHPIRATTNTMYDLASNTKMYATNFALQKLVYEGKIDVNDLVSKYIPGVKDMPGDKIKGKDKLRIIDILHHVAGFPADPQYPNKNVAGKLFSQSKSTTLEMIKKTPLEYQPGSKHIYSDVDYMILGFIIESITAMPLDRYVETTIYKPLGLKHTVFNPLMKGFTPPQIAATELHGNTRDGVIHFPNIRTNTLWGQVHDEKAWYSMGGVSGHAGLFSDTHDMAVLMQVMLNGGGYGNVKLFDDKTVAQFTRRSPEDATFGLGWRVNGNASMTPTFGVLASPQTYGHTGWTGTLTSIDPVNHMAIVILGNRPHSPVANPKVNPNVFVSGLLPAATYGWIVDQIYGSLK.

A helical; Signal-anchor transmembrane segment spans residues 7-25 (ATVLLTFSLSAFAVEYPVL).

It belongs to the peptidase S12 family. YfeW subfamily.

It is found in the cell inner membrane. It catalyses the reaction Preferential cleavage: (Ac)2-L-Lys-D-Ala-|-D-Ala. Also transpeptidation of peptidyl-alanyl moieties that are N-acyl substituents of D-alanine.. The sequence is that of Putative D-alanyl-D-alanine carboxypeptidase from Salmonella paratyphi A (strain ATCC 9150 / SARB42).